The primary structure comprises 59 residues: UPF0434 protein GOX0764 (59 aa).

Belongs to the UPF0434 family.

In Gluconobacter oxydans (strain 621H) (Gluconobacter suboxydans), this protein is UPF0434 protein GOX0764.